The primary structure comprises 589 residues: Monocopper oxidase-like protein SKS1 (589 aa).

The signal sequence occupies residues 1–24; sequence MAATCSLLASFLLCFALLSAVSFA. N-linked (GlcNAc...) asparagine glycosylation is found at N62, N111, N204, N243, N260, N296, N345, N365, N433, and N447. Residues 322–356 are disordered; the sequence is LPVPKTDVSSPWSAMSQPKTIRQNTSASGARPNPQ. Positions 328–349 are enriched in polar residues; it reads DVSSPWSAMSQPKTIRQNTSAS. H455 serves as a coordination point for Cu cation. A lipid anchor (GPI-anchor amidated serine) is attached at S563. Positions 564–589 are cleaved as a propeptide — removed in mature form; that stretch reads AATSILNGHLKLMLLMVLLASVFRFC.

Belongs to the multicopper oxidase family. Cu cation serves as cofactor.

The protein resides in the cell membrane. This is Monocopper oxidase-like protein SKS1 (SKS1) from Arabidopsis thaliana (Mouse-ear cress).